Here is a 202-residue protein sequence, read N- to C-terminus: MADEYLVPLDQYLAAGVHIGTQQKTKDMKKFIYRVRQDGLYVLDVRKTDERLKVAGKFLARFEPQSILAVSVRLYGQKPVKKFGEVTGARAIPGRFLPGTMTNPAVKNFFEPEVIIITDPRADHQAMKEAIEIGIPIVALVDTENLLSYVDLAIPTNNKGRKALALIYWILAREILYNRGEISSREEFKIPVEEFEMKIVRR.

Belongs to the universal ribosomal protein uS2 family.

The polypeptide is Small ribosomal subunit protein uS2 (rps2) (Pyrococcus horikoshii (strain ATCC 700860 / DSM 12428 / JCM 9974 / NBRC 100139 / OT-3)).